We begin with the raw amino-acid sequence, 372 residues long: 4-hydroxy-3-methylbut-2-en-1-yl diphosphate synthase (flavodoxin) (372 aa).

Cys-270, Cys-273, Cys-305, and Glu-312 together coordinate [4Fe-4S] cluster.

Belongs to the IspG family. [4Fe-4S] cluster serves as cofactor.

It catalyses the reaction (2E)-4-hydroxy-3-methylbut-2-enyl diphosphate + oxidized [flavodoxin] + H2O + 2 H(+) = 2-C-methyl-D-erythritol 2,4-cyclic diphosphate + reduced [flavodoxin]. It participates in isoprenoid biosynthesis; isopentenyl diphosphate biosynthesis via DXP pathway; isopentenyl diphosphate from 1-deoxy-D-xylulose 5-phosphate: step 5/6. Functionally, converts 2C-methyl-D-erythritol 2,4-cyclodiphosphate (ME-2,4cPP) into 1-hydroxy-2-methyl-2-(E)-butenyl 4-diphosphate. This is 4-hydroxy-3-methylbut-2-en-1-yl diphosphate synthase (flavodoxin) from Vibrio campbellii (strain ATCC BAA-1116).